We begin with the raw amino-acid sequence, 91 residues long: Non-hemolytic enterotoxin 105 kDa component (91 aa).

The cofactor is Zn(2+).

The protein resides in the secreted. In terms of biological role, this protein is a metalloprotease with gelatinolytic and collagenolytic activity and is a component of the non-hemolytic enterotoxin complex (NHE). This is Non-hemolytic enterotoxin 105 kDa component from Bacillus cereus.